Consider the following 54-residue polypeptide: Small, acid-soluble spore protein gamma-type (54 aa).

Residues 1-54 form a disordered region; the sequence is MAKKNRNKQQQEMQQQQQQHQAEFANEFAEGSSAEQARQQQQKAAGKRQKKNQQ. Low complexity-rich tracts occupy residues 10-21 and 29-44; these read QQEMQQQQQQHQ and AEGS…QQKA. The segment covering 45 to 54 has biased composition (basic residues); the sequence is AGKRQKKNQQ.

The protein belongs to the gamma-type SASP family.

In terms of biological role, SASP are proteins degraded in the first minutes of spore germination and provide amino acids for both new protein synthesis and metabolism. These proteins may be involved in dormant spore's high resistance to UV light. The chain is Small, acid-soluble spore protein gamma-type (sspA) from Alkalihalophilus pseudofirmus (strain ATCC BAA-2126 / JCM 17055 / OF4) (Bacillus pseudofirmus).